A 99-amino-acid chain; its full sequence is MIPLKMLLLVTLLLGASLQVTHAARGTNVGRECCLEYFKGAIPISRLTRWYKTSGECPKDAIVFVTVQGKSICSDPKDKRVKKAVRYLQRTWKGGPQES.

An N-terminal signal peptide occupies residues 1–23 (MIPLKMLLLVTLLLGASLQVTHA). 2 disulfide bridges follow: cysteine 33/cysteine 57 and cysteine 34/cysteine 73.

It belongs to the intercrine beta (chemokine CC) family. In terms of tissue distribution, expressed in thymus, spleen, lymph node, lung and heart.

The protein localises to the secreted. Chemokine, which displays chemotactic activity for T lymphocytes, preferentially Th2 cells, but not monocytes or granulocytes. Therefore plays an important role in a wide range of inflammatory and immunological processes. Acts by binding to CCR4 at T-cell surface. Mediates GM-CSF/CSF2-driven pain and inflammation. In the brain, required to maintain the typical, highly branched morphology of hippocampal microglia under homeostatic conditions. May be important for the appropriate adaptation of microglial morphology and synaptic plasticity to acute lipopolysaccharide (LPS)-induced neuroinflammation. Plays a role in wound healing, mainly by inducing fibroblast migration into the wound. In Canis lupus familiaris (Dog), this protein is C-C motif chemokine 17 (CCL17).